The following is a 351-amino-acid chain: Transmembrane protein 255A (351 aa).

A run of 4 helical transmembrane segments spans residues 30-50, 57-77, 89-109, and 226-246; these read IYVT…GLAA, VTVG…LGII, LVAS…CAIV, and TILN…LGGF. The segment at 302-331 is disordered; it reads FPSSPPSGLSDEQEPQSPSPSPSYMWSSSA.

This sequence belongs to the TMEM255 family.

It is found in the membrane. The protein is Transmembrane protein 255A (Tmem255a) of Mus musculus (Mouse).